A 514-amino-acid polypeptide reads, in one-letter code: Peptide chain release factor 3 (514 aa).

Residues 8 to 268 (KKRRTFAIIS…TFLEFAPEPH (261 aa)) enclose the tr-type G domain. GTP contacts are provided by residues 17–24 (SHPDAGKT), 85–89 (DTPGH), and 139–142 (NKLD).

Belongs to the TRAFAC class translation factor GTPase superfamily. Classic translation factor GTPase family. PrfC subfamily.

It localises to the cytoplasm. In terms of biological role, increases the formation of ribosomal termination complexes and stimulates activities of RF-1 and RF-2. It binds guanine nucleotides and has strong preference for UGA stop codons. It may interact directly with the ribosome. The stimulation of RF-1 and RF-2 is significantly reduced by GTP and GDP, but not by GMP. The sequence is that of Peptide chain release factor 3 from Streptococcus pyogenes serotype M28 (strain MGAS6180).